We begin with the raw amino-acid sequence, 238 residues long: Sugar fermentation stimulation protein homolog (238 aa).

Belongs to the SfsA family.

The protein is Sugar fermentation stimulation protein homolog of Shewanella denitrificans (strain OS217 / ATCC BAA-1090 / DSM 15013).